The following is a 694-amino-acid chain: Elongation factor G (694 aa).

The tr-type G domain occupies 9–288 (DAIRNIGIMA…VIVKWLPSPL (280 aa)). GTP contacts are provided by residues 18–25 (AHIDAGKT), 82–86 (DTPGH), and 136–139 (NKMD).

Belongs to the TRAFAC class translation factor GTPase superfamily. Classic translation factor GTPase family. EF-G/EF-2 subfamily.

Its subcellular location is the cytoplasm. In terms of biological role, catalyzes the GTP-dependent ribosomal translocation step during translation elongation. During this step, the ribosome changes from the pre-translocational (PRE) to the post-translocational (POST) state as the newly formed A-site-bound peptidyl-tRNA and P-site-bound deacylated tRNA move to the P and E sites, respectively. Catalyzes the coordinated movement of the two tRNA molecules, the mRNA and conformational changes in the ribosome. This chain is Elongation factor G, found in Chlamydia trachomatis serovar A (strain ATCC VR-571B / DSM 19440 / HAR-13).